The chain runs to 338 residues: Popeye domain-containing protein 1-A (338 aa).

Residues 1-40 (MTTESIFITTLPMDFNSQFDNITIGLNDNETLCENWREIH) are Extracellular-facing. Asn-21 and Asn-29 each carry an N-linked (GlcNAc...) asparagine glycan. A helical membrane pass occupies residues 41 to 61 (HLVFHLANTCFAAGLVIPSTL). The Cytoplasmic segment spans residues 62-65 (NLHM). The helical transmembrane segment at 66-86 (LFLRGMLCLGCTFFIIWAVLF) threads the bilayer. Residues 87-91 (RCALD) are Extracellular-facing. The chain crosses the membrane as a helical span at residues 92–112 (IMIWNATFLSINFMHFVYLVY). Residues 113–338 (KKRPIKIKKE…VGPLSHAVFC (226 aa)) lie on the Cytoplasmic side of the membrane. Residues 296–317 (TNDNEDGLQNFLRGTSTTSSQR) form a disordered region. The span at 307–317 (LRGTSTTSSQR) shows a compositional bias: polar residues.

It belongs to the popeye family. As to expression, expressed in the heart.

It localises to the lateral cell membrane. Its subcellular location is the cell junction. The protein localises to the tight junction. The protein resides in the membrane. Functionally, cell adhesion molecule involved in the establishment and/or maintenance of cell integrity. Plays a role in vamp3-mediated vesicular transport and recycling of different receptor molecules. May be involved in the formation and regulation of the tight junction (TJ) paracellular permeability barrier in epithelial cells. May induce primordial adhesive contact and aggregation of epithelial cells in a Ca(2+)-independent manner. May be involved in epithelial movement during corneal sheet formation and regeneration. May play a role in the regulation of cell shape and movement by modulating the Rho-GTPase activity. May also be involved in striated muscle regeneration and in the regulation of cell spreading. This is Popeye domain-containing protein 1-A (popdc1-a) from Xenopus laevis (African clawed frog).